Here is a 123-residue protein sequence, read N- to C-terminus: uncharacterized protein (123 aa).

Residues 1–24 (MLPLCLTFLSFFLSLGGSFKAVMT) form the signal peptide. A run of 2 helical transmembrane segments spans residues 39–59 (FWIFNWTVTLIPLNSLVALAI) and 101–121 (FGGILTIDLSFYWALGVALTG).

The protein resides in the membrane. This is an uncharacterized protein from Saccharomyces cerevisiae (strain ATCC 204508 / S288c) (Baker's yeast).